Reading from the N-terminus, the 514-residue chain is Maturase K (514 aa).

Belongs to the intron maturase 2 family. MatK subfamily.

Its subcellular location is the plastid. It is found in the chloroplast. Functionally, usually encoded in the trnK tRNA gene intron. Probably assists in splicing its own and other chloroplast group II introns. The protein is Maturase K of Acer palmatum (Japanese maple).